The sequence spans 189 residues: Casparian strip membrane protein 2 (189 aa).

Residues 1–21 (MKVSTIESGEISKGASSPRKG) are disordered. Residues 1-25 (MKVSTIESGEISKGASSPRKGMKRG) lie on the Cytoplasmic side of the membrane. A helical transmembrane segment spans residues 26–46 (LSIMDFILRIFAAMSTLGSAL). Residues 47-73 (SMGTAKQTMPFATRFVRFKVSFHDLPT) lie on the Extracellular side of the membrane. A helical membrane pass occupies residues 74–94 (FLFFVTANSIVCGYLALSLVL). Topologically, residues 95–108 (SFFHIVRTISVKSR) are cytoplasmic. A helical transmembrane segment spans residues 109–129 (ILLVFLDTVMFGLLTSGASAA). Topologically, residues 130 to 163 (AAIVYVAHYGNPSANWFPFCQQYNSFCGRISGSL) are extracellular. The helical transmembrane segment at 164–184 (VGSFIAVVIFMILILMSGISI) threads the bilayer. Topologically, residues 185–189 (SKSKH) are cytoplasmic.

Belongs to the Casparian strip membrane proteins (CASP) family. Homodimer and heterodimers.

The protein resides in the cell membrane. Its function is as follows. Regulates membrane-cell wall junctions and localized cell wall deposition. Required for establishment of the Casparian strip membrane domain (CSD) and the subsequent formation of Casparian strips, a cell wall modification of the root endodermis that determines an apoplastic barrier between the intraorganismal apoplasm and the extraorganismal apoplasm and prevents lateral diffusion. The chain is Casparian strip membrane protein 2 from Medicago truncatula (Barrel medic).